Here is a 699-residue protein sequence, read N- to C-terminus: Polyribonucleotide nucleotidyltransferase (699 aa).

Aspartate 487 and aspartate 493 together coordinate Mg(2+). The KH domain occupies proline 554–isoleucine 613. One can recognise an S1 motif domain in the interval glycine 623 to lysine 691.

This sequence belongs to the polyribonucleotide nucleotidyltransferase family. Mg(2+) serves as cofactor.

The protein resides in the cytoplasm. It carries out the reaction RNA(n+1) + phosphate = RNA(n) + a ribonucleoside 5'-diphosphate. Functionally, involved in mRNA degradation. Catalyzes the phosphorolysis of single-stranded polyribonucleotides processively in the 3'- to 5'-direction. The chain is Polyribonucleotide nucleotidyltransferase from Azoarcus sp. (strain BH72).